We begin with the raw amino-acid sequence, 257 residues long: uncharacterized protein (257 aa).

A helical membrane pass occupies residues 7–27 (LMLGICLVLLIILIVGYVIMT).

Belongs to the staphylococcal tandem lipoprotein family.

It is found in the cell membrane. This is an uncharacterized protein from Staphylococcus aureus (strain Mu50 / ATCC 700699).